A 253-amino-acid chain; its full sequence is MHRRPSKQQVEREILSEKIKAVFHEHKGRYGAVRITKVLHNTGIMTNTKRVGKLMHLMGLYAKGSRYKYKHYNRKGASLSRPNLINQIFKATAPNKVWLGDMTYIPTKEGTLYLAVNIDVFSRKIVGWSMSSRMQDKLVRDCFLQACGKEHPQPGLIVHTDQGSQYTSSRYQSTLRQVGAQSSMSRKGNPYDNAMMESFYKTLKRELINDAHFETRAEATQEIFKYIETYYNTKRMHSGLDYKSPKDFEKYNS.

In terms of domain architecture, Integrase catalytic spans 90 to 253 (KATAPNKVWL…SPKDFEKYNS (164 aa)).

Belongs to the transposase IS3/IS150/IS904 family.

In terms of biological role, involved in the transposition of the insertion sequence. In Lactococcus lactis subsp. lactis (strain IL1403) (Streptococcus lactis), this protein is Transposase for insertion sequence element IS904 (nisX1).